Consider the following 255-residue polypeptide: (R)-S-adenosyl-L-methionine hydrolase (255 aa).

The adenosine site is built by D9, D70, and N186. (R)-S-adenosyl-L-methionine-binding residues include N186, S227, E232, and V235. Position 235 (V235) interacts with adenosine.

The protein belongs to the SAM hydrolase / SAM-dependent halogenase family. In terms of assembly, homotrimer.

The enzyme catalyses (R)-S-adenosyl-L-methionine + H2O = adenosine + L-methionine + H(+). Its function is as follows. Catalyzes the hydrolysis of S-adenosyl-L-methionine (SAM) into adenosine and L-methionine. Does not have chlorinase or fluorinase activity. The sequence is that of (R)-S-adenosyl-L-methionine hydrolase from Thermus thermophilus (strain ATCC 27634 / DSM 579 / HB8).